Here is a 143-residue protein sequence, read N- to C-terminus: MAKKKAISWIKLQVPAAQAAPGAKIGQALGPHGVSGPQFVKEFNERTAKMEPGIVVPVIITVYSDKSFSFIVKTPPASILIKKAIGIESGSKKSNTDKVGTISKEKLMEIVRIKMPDLNAKSESAAFKIISGSARSMGVEVEK.

This sequence belongs to the universal ribosomal protein uL11 family. As to quaternary structure, part of the ribosomal stalk of the 50S ribosomal subunit. Interacts with L10 and the large rRNA to form the base of the stalk. L10 forms an elongated spine to which L12 dimers bind in a sequential fashion forming a multimeric L10(L12)X complex. Post-translationally, one or more lysine residues are methylated.

Functionally, forms part of the ribosomal stalk which helps the ribosome interact with GTP-bound translation factors. This chain is Large ribosomal subunit protein uL11, found in Borreliella afzelii (strain PKo) (Borrelia afzelii).